The chain runs to 338 residues: SPbeta prophage-derived uncharacterized protein YonB (338 aa).

This chain is SPbeta prophage-derived uncharacterized protein YonB (yonB), found in Bacillus subtilis (strain 168).